Here is a 274-residue protein sequence, read N- to C-terminus: tRNA pseudouridine synthase A (274 aa).

Catalysis depends on aspartate 60, which acts as the Nucleophile. Tyrosine 118 provides a ligand contact to substrate.

This sequence belongs to the tRNA pseudouridine synthase TruA family. Homodimer.

It catalyses the reaction uridine(38/39/40) in tRNA = pseudouridine(38/39/40) in tRNA. In terms of biological role, formation of pseudouridine at positions 38, 39 and 40 in the anticodon stem and loop of transfer RNAs. The polypeptide is tRNA pseudouridine synthase A (Picosynechococcus sp. (strain ATCC 27264 / PCC 7002 / PR-6) (Agmenellum quadruplicatum)).